A 375-amino-acid chain; its full sequence is MAGSQIKIPLPKPPDSDSQRLNAFPIIMAQEGKGRLLRQIRLRKILSGDPSDQQITFVNTYGFIRATPETSEFISESSPQKVTPVVTACMLSFGAGPVLEDPQHMLKALDQTDIRVRKTASDKEQILFEINRIPNLFRHHQISADHLIQASSDKYVKSPAKLIAGVNYIYCVTFLSVTVCSASLKFRVARPLLAARSRLVRAVQMEVLLRVTCKKDSQMAKSMLNDPEGEGCIASVWFHLCNLCKGRNKLRSYDENYFASKCRKMNLTVSIGDMWGPTILVHAGGHIPTTAKPFFNSRGWVCHPIHQSSPSLAKTLWSSGCEIKAASAILQGSDYASLAKTDDIIYSKIKVDKDAANYKGVSWSPFRKSASMSNL.

The protein belongs to the morbillivirus/respirovirus/rubulavirus M protein family.

Its subcellular location is the virion. Its function is as follows. The M protein has a crucial role in virus assembly and interacts with the RNP complex as well as with the viral membrane. This is Matrix protein (M) from Homo sapiens (Human).